We begin with the raw amino-acid sequence, 760 residues long: Prolyl endopeptidase (760 aa).

Residues serine 609, aspartate 693, and histidine 730 each act as charge relay system in the active site.

It belongs to the peptidase S9A family.

It is found in the cytoplasm. The enzyme catalyses Hydrolysis of Pro-|-Xaa &gt;&gt; Ala-|-Xaa in oligopeptides.. Inhibited by chymostatin, Boc-Glu(NHO-Bz)-Pyrrolidide, Z-Pro-L-prolinal dimethyacetal and the peptide H-H-L-P-P-P-V-OH. Functionally, cleaves peptide bonds on the C-terminal side of prolyl residues within peptides that are up to approximately 30 amino acids long. The chain is Prolyl endopeptidase (prep) from Dictyostelium discoideum (Social amoeba).